We begin with the raw amino-acid sequence, 285 residues long: Diaminopimelate epimerase 2 (285 aa).

Substrate is bound by residues Asn-11, Asn-63, 73–74, Asn-158, Asn-191, 209–210, and 219–220; these read GN, ER, and GS.

Belongs to the diaminopimelate epimerase family. In terms of assembly, homodimer.

The protein resides in the cytoplasm. It carries out the reaction (2S,6S)-2,6-diaminopimelate = meso-2,6-diaminopimelate. It participates in amino-acid biosynthesis; L-lysine biosynthesis via DAP pathway; DL-2,6-diaminopimelate from LL-2,6-diaminopimelate: step 1/1. Its function is as follows. Catalyzes the stereoinversion of LL-2,6-diaminopimelate (L,L-DAP) to meso-diaminopimelate (meso-DAP), a precursor of L-lysine and an essential component of the bacterial peptidoglycan. The protein is Diaminopimelate epimerase 2 of Nostoc sp. (strain PCC 7120 / SAG 25.82 / UTEX 2576).